We begin with the raw amino-acid sequence, 364 residues long: Pre-small/secreted glycoprotein (364 aa).

The signal sequence occupies residues M1–S32. N40 carries an N-linked (GlcNAc...) asparagine; by host glycan. 2 disulfide bridges follow: C108–C135 and C121–C147. N-linked (GlcNAc...) asparagine; by host glycosylation is found at N204, N228, N238, N257, and N268.

It belongs to the filoviruses glycoprotein family. In terms of assembly, homodimer; disulfide-linked. The homodimers are linked by two disulfide bonds in a parallel orientation. As to quaternary structure, monomer. In terms of processing, this precursor is processed into mature sGP and delta-peptide by host furin or furin-like proteases. The cleavage site corresponds to the furin optimal cleavage sequence [KR]-X-[KR]-R. Post-translationally, N-glycosylated. O-glycosylated.

The protein localises to the secreted. In terms of biological role, seems to possess an anti-inflammatory activity as it can reverse the barrier-decreasing effects of TNF alpha. Might therefore contribute to the lack of inflammatory reaction seen during infection in spite the of extensive necrosis and massive virus production. Does not seem to be involved in activation of primary macrophages. Does not seem to interact specifically with neutrophils. Functionally, viroporin that permeabilizes mammalian cell plasma membranes. It acts by altering permeation of ionic compounds and small molecules. This activity may lead to viral enterotoxic activity. This Zaire ebolavirus (strain Eckron-76) (ZEBOV) protein is Pre-small/secreted glycoprotein (GP).